Reading from the N-terminus, the 224-residue chain is tRNA (guanine-N(7)-)-methyltransferase (224 aa).

Glu-54, Glu-79, Asp-106, and Asp-129 together coordinate S-adenosyl-L-methionine. Asp-129 is a catalytic residue. The substrate site is built by Lys-133 and Asp-165.

It belongs to the class I-like SAM-binding methyltransferase superfamily. TrmB family.

The enzyme catalyses guanosine(46) in tRNA + S-adenosyl-L-methionine = N(7)-methylguanosine(46) in tRNA + S-adenosyl-L-homocysteine. Its pathway is tRNA modification; N(7)-methylguanine-tRNA biosynthesis. In terms of biological role, catalyzes the formation of N(7)-methylguanine at position 46 (m7G46) in tRNA. This Chlamydia felis (strain Fe/C-56) (Chlamydophila felis) protein is tRNA (guanine-N(7)-)-methyltransferase.